A 427-amino-acid chain; its full sequence is Dorsalin-1 (427 aa).

Residues Met-1–Thr-20 form the signal peptide. Positions Arg-21–Arg-318 are excised as a propeptide. Residues Asn-71, Asn-136, Asn-265, and Asn-292 are each glycosylated (N-linked (GlcNAc...) asparagine). A disordered region spans residues Lys-288–Gly-321. Over residues Ala-307–Gly-321 the composition is skewed to basic residues. Cystine bridges form between Cys-325/Cys-391, Cys-354/Cys-424, and Cys-358/Cys-426.

This sequence belongs to the TGF-beta family. Homodimer; disulfide-linked. In terms of tissue distribution, expressed selectively in the dorsal neural tube. Lower levels seen in kidney and myotomal cells.

The protein resides in the secreted. Appears to regulate cell differentiation within the neural tube. May regulate the differentiation of cell types along the dorsoventral axis of the neural tube, acting in conjunction with distinct ventralizing signals from the notochord and floor plate. Controls the cell differentiation in the neural tube in several ways: (1) promotes the differentiation of cell types that derive from the dorsal neural tube. (2) ensures that the dorsal neural tube is refractory to ventralizing species from the notochord. (3) can diffuse and influence the fate of cells in more ventral regions of the neural tube. The polypeptide is Dorsalin-1 (DSL1) (Gallus gallus (Chicken)).